Here is a 411-residue protein sequence, read N- to C-terminus: UPF0761 membrane protein PLES_43641 (411 aa).

The next 6 helical transmembrane spans lie at 36 to 56, 92 to 112, 132 to 152, 174 to 194, 207 to 229, and 244 to 264; these read LFAV…IPAF, HLTW…LVTI, FLLY…GFAV, LLGL…YSAV, GGVF…VSLF, and IFLL…VLVC.

The protein belongs to the UPF0761 family.

It is found in the cell inner membrane. The protein is UPF0761 membrane protein PLES_43641 of Pseudomonas aeruginosa (strain LESB58).